The primary structure comprises 311 residues: Pyrimidine-specific ribonucleoside hydrolase RihA (311 aa).

The active site involves His240.

The protein belongs to the IUNH family. RihA subfamily.

Functionally, hydrolyzes cytidine or uridine to ribose and cytosine or uracil, respectively. The sequence is that of Pyrimidine-specific ribonucleoside hydrolase RihA from Salmonella choleraesuis (strain SC-B67).